We begin with the raw amino-acid sequence, 175 residues long: Crossover junction endodeoxyribonuclease RuvC (175 aa).

Residues D7, E68, and D141 contribute to the active site. Mg(2+)-binding residues include D7, E68, and D141.

The protein belongs to the RuvC family. As to quaternary structure, homodimer which binds Holliday junction (HJ) DNA. The HJ becomes 2-fold symmetrical on binding to RuvC with unstacked arms; it has a different conformation from HJ DNA in complex with RuvA. In the full resolvosome a probable DNA-RuvA(4)-RuvB(12)-RuvC(2) complex forms which resolves the HJ. Mg(2+) is required as a cofactor.

The protein localises to the cytoplasm. It carries out the reaction Endonucleolytic cleavage at a junction such as a reciprocal single-stranded crossover between two homologous DNA duplexes (Holliday junction).. Its function is as follows. The RuvA-RuvB-RuvC complex processes Holliday junction (HJ) DNA during genetic recombination and DNA repair. Endonuclease that resolves HJ intermediates. Cleaves cruciform DNA by making single-stranded nicks across the HJ at symmetrical positions within the homologous arms, yielding a 5'-phosphate and a 3'-hydroxyl group; requires a central core of homology in the junction. The consensus cleavage sequence is 5'-(A/T)TT(C/G)-3'. Cleavage occurs on the 3'-side of the TT dinucleotide at the point of strand exchange. HJ branch migration catalyzed by RuvA-RuvB allows RuvC to scan DNA until it finds its consensus sequence, where it cleaves and resolves the cruciform DNA. The chain is Crossover junction endodeoxyribonuclease RuvC from Salinispora arenicola (strain CNS-205).